A 1039-amino-acid polypeptide reads, in one-letter code: Error-prone DNA polymerase (1039 aa).

The protein belongs to the DNA polymerase type-C family. DnaE2 subfamily.

The protein resides in the cytoplasm. The catalysed reaction is DNA(n) + a 2'-deoxyribonucleoside 5'-triphosphate = DNA(n+1) + diphosphate. Its function is as follows. DNA polymerase involved in damage-induced mutagenesis and translesion synthesis (TLS). It is not the major replicative DNA polymerase. This chain is Error-prone DNA polymerase, found in Corynebacterium diphtheriae (strain ATCC 700971 / NCTC 13129 / Biotype gravis).